The following is a 95-amino-acid chain: Co-chaperonin GroES (95 aa).

This sequence belongs to the GroES chaperonin family. As to quaternary structure, heptamer of 7 subunits arranged in a ring. Interacts with the chaperonin GroEL.

It localises to the cytoplasm. Together with the chaperonin GroEL, plays an essential role in assisting protein folding. The GroEL-GroES system forms a nano-cage that allows encapsulation of the non-native substrate proteins and provides a physical environment optimized to promote and accelerate protein folding. GroES binds to the apical surface of the GroEL ring, thereby capping the opening of the GroEL channel. In Rickettsia typhi (strain ATCC VR-144 / Wilmington), this protein is Co-chaperonin GroES.